The chain runs to 188 residues: Probable nicotinate-nucleotide adenylyltransferase (188 aa).

This sequence belongs to the NadD family.

The catalysed reaction is nicotinate beta-D-ribonucleotide + ATP + H(+) = deamido-NAD(+) + diphosphate. The protein operates within cofactor biosynthesis; NAD(+) biosynthesis; deamido-NAD(+) from nicotinate D-ribonucleotide: step 1/1. Its function is as follows. Catalyzes the reversible adenylation of nicotinate mononucleotide (NaMN) to nicotinic acid adenine dinucleotide (NaAD). The chain is Probable nicotinate-nucleotide adenylyltransferase from Listeria monocytogenes serotype 4a (strain HCC23).